The chain runs to 64 residues: Conotoxin Ts-011 (64 aa).

The signal sequence occupies residues 1 to 22 (MHCLPVLVILLLLIASTPSVDA). A propeptide spanning residues 23-52 (RPKTKDDVPPASFHGADDANRILQTLWNLR) is cleaved from the precursor. The residue at position 63 (Ile63) is an Isoleucine amide.

It belongs to the conotoxin T superfamily. Post-translationally, contains 2 disulfide bonds that can be either 'C1-C3, C2-C4' or 'C1-C4, C2-C3', since these disulfide connectivities have been observed for conotoxins with cysteine framework V (for examples, see AC P0DQQ7 and AC P81755). Expressed by the venom duct.

It localises to the secreted. The polypeptide is Conotoxin Ts-011 (Conus tessulatus (Tessellate cone)).